Consider the following 93-residue polypeptide: Protein IDA-LIKE 4 (93 aa).

The first 35 residues, 1–35 (MYPTRPHYWRRRLSINRPQAFLLLILCLFFIHHCD), serve as a signal peptide directing secretion.

Expressed in mainly in buds. Lower levels in roots. Detected at the base of pedicel, in the floral and funicule abscission zones, in vascular tissues, in guard cells of young seedlings and in hydathodes.

The protein resides in the secreted. Its subcellular location is the extracellular space. In terms of biological role, may be involved in floral abscission. This chain is Protein IDA-LIKE 4 (IDL4), found in Arabidopsis thaliana (Mouse-ear cress).